The following is a 562-amino-acid chain: Undecaprenyl phosphate-alpha-4-amino-4-deoxy-L-arabinose arabinosyl transferase (562 aa).

Transmembrane regions (helical) follow at residues 14–34 (IKFSITIIAFILLYYLIPLNY), 91–111 (FSVRFGSFLFTLFSANLIYLF), 120–140 (ILSLNSVIIFLSILLVYIIGT), 142–162 (SVLDSIISFWINLSMISFWLA), 186–206 (FITKGFISLLIPFISIFIWLF), 215–235 (TIIHCFFSLLISILIIFPWIY), 267–287 (PFWYYFPIFIIGCLPWSGFLF), 302–322 (IEFYLLLWIIVQFCFFSISKG), 324–344 (LPTYILPCFFPLSILIAKNIE), 354–374 (LLKINSIINTIVGSTLLIFII), 395–415 (LILCIFSIFVWIFLNLCIIFN), and 425–445 (LSIIGIAFLFGLYVPEKIIYA).

The protein belongs to the glycosyltransferase 83 family.

The protein resides in the cell inner membrane. The catalysed reaction is 4-amino-4-deoxy-alpha-L-arabinopyranosyl di-trans,octa-cis-undecaprenyl phosphate + lipid IVA = lipid IIA + di-trans,octa-cis-undecaprenyl phosphate.. The protein operates within lipopolysaccharide metabolism; 4-amino-4-deoxy-beta-L-arabinose-lipid A biosynthesis. Its function is as follows. Catalyzes the transfer of the L-Ara4N moiety of the glycolipid undecaprenyl phosphate-alpha-L-Ara4N to lipid A. The modified arabinose is attached to lipid A and is required for resistance to polymyxin and cationic antimicrobial peptides. The protein is Undecaprenyl phosphate-alpha-4-amino-4-deoxy-L-arabinose arabinosyl transferase of Wigglesworthia glossinidia brevipalpis.